An 829-amino-acid polypeptide reads, in one-letter code: RNA-directed RNA polymerase (829 aa).

Residues 1–39 (MKEPVDCRLSTPAGFSGTVPPPGRTKAARPGTIPVRRSR) form a disordered region.

Forms a ribonucleoprotein complex with the 20S RNA, where a single polymerase molecule binds to a single viral RNA genome. Since the viral RNA is not encapsidated, ribonucleoprotein complex formation appears to be the strategy to survive in the host as persistent virus.

The protein resides in the host cytoplasm. It carries out the reaction RNA(n) + a ribonucleoside 5'-triphosphate = RNA(n+1) + diphosphate. Its function is as follows. RNA-directed RNA polymerase that replicates the viral (+) and (-) genome. The polypeptide is RNA-directed RNA polymerase (Saccharomyces cerevisiae (Baker's yeast)).